Here is a 605-residue protein sequence, read N- to C-terminus: Elongation factor 4 (605 aa).

In terms of domain architecture, tr-type G spans 11-193 (KNIRNFSIIA…TLVDVIPAPT (183 aa)). GTP-binding positions include 23-28 (DHGKST) and 140-143 (NKID).

It belongs to the TRAFAC class translation factor GTPase superfamily. Classic translation factor GTPase family. LepA subfamily.

It is found in the cell inner membrane. The enzyme catalyses GTP + H2O = GDP + phosphate + H(+). Required for accurate and efficient protein synthesis under certain stress conditions. May act as a fidelity factor of the translation reaction, by catalyzing a one-codon backward translocation of tRNAs on improperly translocated ribosomes. Back-translocation proceeds from a post-translocation (POST) complex to a pre-translocation (PRE) complex, thus giving elongation factor G a second chance to translocate the tRNAs correctly. Binds to ribosomes in a GTP-dependent manner. The protein is Elongation factor 4 of Acinetobacter baumannii (strain SDF).